Reading from the N-terminus, the 342-residue chain is S-adenosylmethionine:tRNA ribosyltransferase-isomerase (342 aa).

This sequence belongs to the QueA family. As to quaternary structure, monomer.

The protein resides in the cytoplasm. It catalyses the reaction 7-aminomethyl-7-carbaguanosine(34) in tRNA + S-adenosyl-L-methionine = epoxyqueuosine(34) in tRNA + adenine + L-methionine + 2 H(+). It functions in the pathway tRNA modification; tRNA-queuosine biosynthesis. Functionally, transfers and isomerizes the ribose moiety from AdoMet to the 7-aminomethyl group of 7-deazaguanine (preQ1-tRNA) to give epoxyqueuosine (oQ-tRNA). The protein is S-adenosylmethionine:tRNA ribosyltransferase-isomerase of Bacillus velezensis (strain DSM 23117 / BGSC 10A6 / LMG 26770 / FZB42) (Bacillus amyloliquefaciens subsp. plantarum).